The chain runs to 310 residues: tRNA dimethylallyltransferase (310 aa).

11 to 18 (GPTGVGKT) provides a ligand contact to ATP. Residue 13 to 18 (TGVGKT) coordinates substrate.

Belongs to the IPP transferase family. In terms of assembly, monomer. Requires Mg(2+) as cofactor.

It catalyses the reaction adenosine(37) in tRNA + dimethylallyl diphosphate = N(6)-dimethylallyladenosine(37) in tRNA + diphosphate. Its function is as follows. Catalyzes the transfer of a dimethylallyl group onto the adenine at position 37 in tRNAs that read codons beginning with uridine, leading to the formation of N6-(dimethylallyl)adenosine (i(6)A). This Latilactobacillus sakei subsp. sakei (strain 23K) (Lactobacillus sakei subsp. sakei) protein is tRNA dimethylallyltransferase.